We begin with the raw amino-acid sequence, 525 residues long: Putative ribose/galactose/methyl galactoside import ATP-binding protein (525 aa).

Residues methionine 1–leucine 15 are compositionally biased toward polar residues. The interval methionine 1–glycine 23 is disordered. ABC transporter domains are found at residues leucine 33–glutamate 269 and lysine 279–lysine 523. Glycine 65–serine 72 provides a ligand contact to ATP.

This sequence belongs to the ABC transporter superfamily. Carbohydrate importer 2 (CUT2) (TC 3.A.1.2) family.

It localises to the cell inner membrane. The catalysed reaction is D-ribose(out) + ATP + H2O = D-ribose(in) + ADP + phosphate + H(+). The enzyme catalyses D-galactose(out) + ATP + H2O = D-galactose(in) + ADP + phosphate + H(+). Functionally, part of an ABC transporter complex involved in carbohydrate import. Could be involved in ribose, galactose and/or methyl galactoside import. Responsible for energy coupling to the transport system. The chain is Putative ribose/galactose/methyl galactoside import ATP-binding protein from Pseudomonas syringae pv. syringae (strain B728a).